A 258-amino-acid polypeptide reads, in one-letter code: Small ribosomal subunit protein mS40 (258 aa).

Residues Met-1–Lys-35 constitute a mitochondrion transit peptide. Phosphoserine occurs at positions 38 and 49. The disordered stretch occupies residues Ser-214–Leu-258. Residues Gly-229–Thr-242 show a composition bias toward pro residues. A compositionally biased stretch (polar residues) spans Glu-245 to Leu-258.

This sequence belongs to the bacterial ribosomal protein bS18 family. Mitochondrion-specific ribosomal protein mS40 subfamily. As to quaternary structure, component of the mitochondrial small ribosomal subunit (mt-SSU). Mature mammalian 55S mitochondrial ribosomes consist of a small (28S) and a large (39S) subunit. The 28S small subunit contains a 12S ribosomal RNA (12S mt-rRNA) and 30 different proteins. The 39S large subunit contains a 16S rRNA (16S mt-rRNA), a copy of mitochondrial valine transfer RNA (mt-tRNA(Val)), which plays an integral structural role, and 52 different proteins. mS40 has a zinc binding site.

It localises to the mitochondrion. The chain is Small ribosomal subunit protein mS40 (MRPS18B) from Homo sapiens (Human).